Consider the following 258-residue polypeptide: Regulatory protein RecX (258 aa).

The protein belongs to the RecX family.

The protein resides in the cytoplasm. Its function is as follows. Modulates RecA activity. This Streptococcus pyogenes serotype M3 (strain ATCC BAA-595 / MGAS315) protein is Regulatory protein RecX.